A 143-amino-acid chain; its full sequence is Ribosome-binding factor A (143 aa).

The disordered stretch occupies residues 123-143 (DNSLQENYKDSDKETKVEKLR).

This sequence belongs to the RbfA family. Monomer. Binds 30S ribosomal subunits, but not 50S ribosomal subunits or 70S ribosomes.

The protein resides in the cytoplasm. One of several proteins that assist in the late maturation steps of the functional core of the 30S ribosomal subunit. Associates with free 30S ribosomal subunits (but not with 30S subunits that are part of 70S ribosomes or polysomes). Required for efficient processing of 16S rRNA. May interact with the 5'-terminal helix region of 16S rRNA. The sequence is that of Ribosome-binding factor A from Francisella philomiragia subsp. philomiragia (strain ATCC 25017 / CCUG 19701 / FSC 153 / O#319-036).